The following is a 640-amino-acid chain: Serine/threonine-protein kinase ELM1 (640 aa).

The tract at residues 27-47 (ELDSPPITPTSQTSSFGSSFS) is disordered. Low complexity predominate over residues 35–47 (PTSQTSSFGSSFS). The Protein kinase domain maps to 88 to 420 (YTLGVSAGSG…PIDSRNHSQI (333 aa)). ATP is bound by residues 94 to 102 (AGSGQFGYV) and Lys-117. Position 152 is a phosphoserine (Ser-152). Residue Asp-259 is the Proton acceptor of the active site. Phosphoserine occurs at positions 516 and 519. Residues 520–529 (LPNLTVNNDK) are compositionally biased toward polar residues. Disordered regions lie at residues 520–547 (LPNL…HSSL) and 562–587 (SPKE…MDRT). The span at 530–541 (QNSDMKTDRSES) shows a compositional bias: basic and acidic residues. Residues 569–579 (RTHINCSQDKP) show a composition bias toward polar residues.

Belongs to the protein kinase superfamily. Ser/Thr protein kinase family. Mg(2+) is required as a cofactor.

It catalyses the reaction L-seryl-[protein] + ATP = O-phospho-L-seryl-[protein] + ADP + H(+). The enzyme catalyses L-threonyl-[protein] + ATP = O-phospho-L-threonyl-[protein] + ADP + H(+). Important role in G1 events required for bud emergence and septin organization. Coordinates cell growth and cell division at G2/M, essential for efficient cytokinesis and for regulation of SWE1. This chain is Serine/threonine-protein kinase ELM1 (ELM1), found in Saccharomyces cerevisiae (strain ATCC 204508 / S288c) (Baker's yeast).